The primary structure comprises 421 residues: Protein HOMOLOG OF MAMMALIAN LYST-INTERACTING PROTEIN 5 (421 aa).

Serine 2 carries the post-translational modification N-acetylserine. A disordered region spans residues 146–374; that stretch reads IKEGRKPTPG…KYHYDSSYQP (229 aa). Positions 165–185 are enriched in polar residues; that stretch reads SIPSSGPSGSYDHSASDTNTT. The segment covering 188 to 207 has biased composition (basic and acidic residues); that stretch reads HRTELDPPHDSNDDSSHHQF. Pro residues predominate over residues 245 to 258; it reads LPPPTGPSDSPYPH. Residues 278–293 are compositionally biased toward polar residues; it reads NYSSHEPSPNSLPNFQ. 2 stretches are compositionally biased toward low complexity: residues 294-308 and 317-337; these read SYPSFSESSLPSTSP and PEPYYSSPHSAPAPSSTSFSS.

It belongs to the VTA1 family. As to quaternary structure, homodimer. Interacts with SKD1/VPS4, VPS60-1, CHMP1A and CHMP1B. Binds to PROS/At4g24370. Interacts with MPK6 and MPK3. Post-translationally, phosphorylated by activated MPK6 and MPK3, this activation is required to trigger multivesicular bodies (MVBs) trafficking upon plant infection.

It localises to the cytoplasm. The protein localises to the endosome membrane. The protein resides in the nucleus. It is found in the endosome. Its subcellular location is the multivesicular body. Functionally, involved in the endosomal multivesicular bodies (MVB) pathway. MVBs contain intraluminal vesicles (ILVs) that are generated by invagination and scission from the limiting membrane of the endosome and are delivered to lysosomes enabling degradation of membrane proteins. Thought to be a cofactor of SKD1/VPS4, which catalyzes the disassembly of membrane-associated ESCRT-III. Target of pathogen-responsive mitogen-activated protein kinases (MPKs) that plays a critical role in plant basal resistance to Pseudomonas syringae in a SKD1-dependent manner by promoting multivesicular bodies (MVBs) trafficking upon plant infection. The sequence is that of Protein HOMOLOG OF MAMMALIAN LYST-INTERACTING PROTEIN 5 from Arabidopsis thaliana (Mouse-ear cress).